The following is a 694-amino-acid chain: Long-chain-fatty-acid--CoA ligase 4 (694 aa).

The interval 1 to 21 (MTEQYSVAVGEAANEHETAPR) is disordered. 269–280 (YTSGSTGTPKGV) serves as a coordination point for ATP. Positions 527–576 (DGWFRTGDIAEWTPKGQVKIIDRKKNLVKTLNGEYIALEKLESIYRSNPY) match the FACS motif.

Belongs to the ATP-dependent AMP-binding enzyme family. Interacts with FAT1. Mg(2+) serves as cofactor.

It localises to the lipid droplet. It catalyses the reaction a long-chain fatty acid + ATP + CoA = a long-chain fatty acyl-CoA + AMP + diphosphate. It carries out the reaction (9Z)-hexadecenoate + ATP + CoA = (9Z)-hexadecenoyl-CoA + AMP + diphosphate. The catalysed reaction is (9Z)-octadecenoate + ATP + CoA = (9Z)-octadecenoyl-CoA + AMP + diphosphate. The enzyme catalyses hexadecanoate + ATP + CoA = hexadecanoyl-CoA + AMP + diphosphate. Activates long-chain fatty acids (LCFA) by esterification of the fatty acids into metabolically active CoA-thioesters for subsequent degradation or incorporation into phospholipids. Also facilitates the transport of LCFAs into the cell, either by active transport or by decreasing the intracellular LCFA concentration. Contributes, with FAA1, to the activation of imported myristate. Also involved in long-chain base (LCB) uptake. In contrast ot LCFA uptake, LCB uptake does not require ATP, suggesting that the enzyme is directly involved in LCB uptake. Involved in the sphingolipid-to-glycerolipid metabolic pathway, converting the sphingolipid metabolite hexadecenoic acid to hexadecenoyl-CoA, which is then further converted to glycerolipids. The polypeptide is Long-chain-fatty-acid--CoA ligase 4 (FAA4) (Saccharomyces cerevisiae (strain ATCC 204508 / S288c) (Baker's yeast)).